Reading from the N-terminus, the 738-residue chain is Junction plakoglobin (738 aa).

ARM repeat units lie at residues 128–167, 168–211, 212–251, 254–293, 294–337, 338–377, 379–416, 419–460, 466–506, 508–547, 570–609, and 611–657; these read NYQDDAELATRAIPELTKLLNDEDPMVVNKASMIVNQLSK, KEAS…LSHH, REGLLSIFKSGGIPALVRMLSSPVESVLFYAITTLHNLLL, EGAKMAVRLADGLQKMVPLLNKNNPKFLAITTDCLQLLAY, GNQE…LSVC, PSNKPAIVEAGGMQALGKHLTSNSPRLVQNCLWTLRNLSD, ATKQEGLDNVLKILVNQLSSDDVNVLTCATGTLSNLTC, GRNK…HLTS, EVAQ…NLAL, PANHAPLYDAGVIPRLVQLLVKSHQDAQRHAASGTQQPYT, PVNRMDIYKLNTIPLFVQLLYSPVENIQRVSSGVLCELAQ, and KEAA…ADYR.

Belongs to the beta-catenin family. Homodimer.

The protein resides in the cell junction. The protein localises to the adherens junction. It is found in the desmosome. It localises to the cytoplasm. Its subcellular location is the cytoskeleton. The protein resides in the membrane. Common junctional plaque protein. The membrane-associated plaques are architectural elements in an important strategic position to influence the arrangement and function of both the cytoskeleton and the cells within the tissue. The presence of plakoglobin in both the desmosomes and in the intermediate junctions suggests that it plays a central role in the structure and function of submembranous plaques. The chain is Junction plakoglobin (jup) from Xenopus laevis (African clawed frog).